The sequence spans 141 residues: Large ribosomal subunit protein uL11 (141 aa).

The protein belongs to the universal ribosomal protein uL11 family. Part of the ribosomal stalk of the 50S ribosomal subunit. Interacts with L10 and the large rRNA to form the base of the stalk. L10 forms an elongated spine to which L12 dimers bind in a sequential fashion forming a multimeric L10(L12)X complex. One or more lysine residues are methylated.

Its function is as follows. Forms part of the ribosomal stalk which helps the ribosome interact with GTP-bound translation factors. The polypeptide is Large ribosomal subunit protein uL11 (Chlamydia felis (strain Fe/C-56) (Chlamydophila felis)).